Consider the following 305-residue polypeptide: Thyroxine 5-deiodinase (305 aa).

Topologically, residues 1–43 are cytoplasmic; that stretch reads MPGQAGRRRLVGGGCRGSQGPLGGAATMLRSLLLHSLRLCAQT. Residues 44 to 63 traverse the membrane as a helical; Signal-anchor for type II membrane protein segment; it reads ASCLVLFPRFLGTACMLWLL. At 64–305 the chain is on the extracellular side; the sequence is DFLCIRKHLL…QLHGPQPRRV (242 aa). The tract at residues 79–98 is disordered; the sequence is GEPETEVELNSDGDEVPPDD. Positions 82–96 are enriched in acidic residues; that stretch reads ETEVELNSDGDEVPP. Residue U171 is part of the active site. A non-standard amino acid (selenocysteine) is located at residue U171.

Belongs to the iodothyronine deiodinase family. As to quaternary structure, monomer. Homodimer. May undergo minor heretodimerization with DIO1 and DIO2. Expressed in brain only.

It localises to the cell membrane. The protein localises to the endosome membrane. The catalysed reaction is 3,3',5'-triiodo-L-thyronine + iodide + A + H(+) = L-thyroxine + AH2. It carries out the reaction 3,3'-diiodo-L-thyronine + iodide + A + H(+) = 3,3',5-triiodo-L-thyronine + AH2. It catalyses the reaction 3-iodo-L-thyronine + iodide + A + H(+) = 3,5-diiodo-L-thyronine + AH2. The enzyme catalyses L-thyronine + iodide + A + H(+) = 3-iodo-L-thyronine + AH2. The catalysed reaction is 3',5'-diiodo-L-thyronine + iodide + A + H(+) = 3,3',5'-triiodo-L-thyronine + AH2. It carries out the reaction 3'-iodo-L-thyronine + iodide + A + H(+) = 3,3'-diiodo-L-thyronine + AH2. It catalyses the reaction 3,3',5'-triiodothyronamine + iodide + A + H(+) = 3,3',5,5'-tetraiodothyronamine + AH2. The enzyme catalyses 3',5'-diiodothyronamine + iodide + A + H(+) = 3,3',5'-triiodothyronamine + AH2. The catalysed reaction is 3,3'-diiodothyronamine + iodide + A + H(+) = 3,3',5-triiodothyronamine + AH2. It carries out the reaction 3-iodothyronamine + iodide + A + H(+) = 3,5-diiodothyronamine + AH2. It catalyses the reaction 3'-iodothyronamine + iodide + A + H(+) = 3,3'-diiodothyronamine + AH2. The enzyme catalyses thyronamine + iodide + A + H(+) = 3-iodothyronamine + AH2. Plays a crucial role in the metabolism of thyroid hormones (TH) and has specific roles in TH activation and inactivation by deiodination, particularly in different tissues. Catalyzes the deiodination of L-thyroxine (T4) to 3,3',5'-triiodothyronine (rT3), 3,5-diiodothyronine (3,5-T2) to 3-monoiodothyronine (3-T1), rT3 to 3',5'-diiodothyronine (3',5'-T2) and 3,3'-diiodothyronine (3,3'-T2) to 3'-monoiodothyronine (3'-T1) via inner-ring deiodination (IRD). Catalyzes the deiodination of 3,5,3'-triiodothyronine (T3) to 3,3'-diiodothyronine (3,3'-T2) via IRD. Catalyzes the deiodination of 3-T1 to L-thyronine (T0) via outer-ring deiodination (ORD). Catalyzes the tyrosyl ring deiodinations of 3,3',5,5'-tetraiodothyronamine, 3,3',5'-triiodothyronamine, 3,5,3'-triiodothyronamine, 3,5-diiodothyronamine, 3,3'-diiodothyronamine and 3-iodothyronamine. The chain is Thyroxine 5-deiodinase (DIO3) from Sus scrofa (Pig).